A 397-amino-acid polypeptide reads, in one-letter code: ATP phosphoribosyltransferase regulatory subunit (397 aa).

Belongs to the class-II aminoacyl-tRNA synthetase family. HisZ subfamily. In terms of assembly, heteromultimer composed of HisG and HisZ subunits.

The protein localises to the cytoplasm. The protein operates within amino-acid biosynthesis; L-histidine biosynthesis; L-histidine from 5-phospho-alpha-D-ribose 1-diphosphate: step 1/9. In terms of biological role, required for the first step of histidine biosynthesis. May allow the feedback regulation of ATP phosphoribosyltransferase activity by histidine. The polypeptide is ATP phosphoribosyltransferase regulatory subunit (Halalkalibacterium halodurans (strain ATCC BAA-125 / DSM 18197 / FERM 7344 / JCM 9153 / C-125) (Bacillus halodurans)).